The primary structure comprises 329 residues: Ankyrin repeat and SOCS box protein 5 (329 aa).

ANK repeat units follow at residues 69 to 98 (ADRS…NVNA), 102 to 131 (DHVT…NANA), 135 to 164 (DGVT…KAQL), 167 to 196 (CFPS…DVDQ), 200 to 229 (HLGT…DVHK), and 232 to 261 (YWDT…DINA). The SOCS box domain occupies 278 to 329 (AVERILLQHEATPSSLCQLCRLCIRNYIGRQRFHLIPQLQLPTLLQNFLQYR).

The protein belongs to the ankyrin SOCS box (ASB) family.

It participates in protein modification; protein ubiquitination. Its function is as follows. May be a substrate-recognition component of a SCF-like ECS (Elongin-Cullin-SOCS-box protein) E3 ubiquitin-protein ligase complex which mediates the ubiquitination and subsequent proteasomal degradation of target proteins. May play a role in the initiation of arteriogenesis. The sequence is that of Ankyrin repeat and SOCS box protein 5 (Asb5) from Mus musculus (Mouse).